A 142-amino-acid polypeptide reads, in one-letter code: Large ribosomal subunit protein uL11 (142 aa).

The protein belongs to the universal ribosomal protein uL11 family. Part of the ribosomal stalk of the 50S ribosomal subunit. Interacts with L10 and the large rRNA to form the base of the stalk. L10 forms an elongated spine to which L12 dimers bind in a sequential fashion forming a multimeric L10(L12)X complex. Post-translationally, one or more lysine residues are methylated.

Functionally, forms part of the ribosomal stalk which helps the ribosome interact with GTP-bound translation factors. The polypeptide is Large ribosomal subunit protein uL11 (Shewanella frigidimarina (strain NCIMB 400)).